The chain runs to 287 residues: Mitochondrial dicarboxylate carrier (287 aa).

3 Solcar repeats span residues 7 to 87, 100 to 187, and 196 to 279; these read SRWY…MRDY, NKVL…AKQL, and DNIF…LRKH. 3 consecutive transmembrane segments (helical) span residues 9–29, 62–81, and 102–122; these read WYFGGLASCGAACCTHPLDLL, GLSASLCRQMTYSLTRFAIY, and VLLGGISGLTGGFVGTPADLV. K158 is modified (N6-acetyllysine). The next 3 helical transmembrane spans lie at 162 to 181, 202 to 222, and 254 to 274; these read GATMASSRGALVTVGQLSCY, FVSSFIAGGCATFLCQPLDVL, and GLFPAGIRLIPHTVLTFMFLE.

Belongs to the mitochondrial carrier (TC 2.A.29) family. As to expression, expressed at very high levels in white adipose tissue. And at low levels in brown adipose tissue, kidney and liver.

Its subcellular location is the mitochondrion inner membrane. The enzyme catalyses (S)-malate(in) + phosphate(out) = (S)-malate(out) + phosphate(in). It catalyses the reaction malonate(out) + (S)-malate(in) = malonate(in) + (S)-malate(out). The catalysed reaction is (S)-malate(in) + succinate(out) = (S)-malate(out) + succinate(in). It carries out the reaction (S)-malate(in) + sulfate(out) = (S)-malate(out) + sulfate(in). The enzyme catalyses malonate(out) + phosphate(in) = malonate(in) + phosphate(out). It catalyses the reaction succinate(out) + phosphate(in) = succinate(in) + phosphate(out). The catalysed reaction is sulfate(out) + phosphate(in) = sulfate(in) + phosphate(out). It carries out the reaction malonate(out) + succinate(in) = malonate(in) + succinate(out). With respect to regulation, regulated by circadian protein CLOCK (Circadian Locomotor Output Cycles Kaput). Catalyzes the electroneutral exchange or flux of physiologically important metabolites such as dicarboxylates (malonate, malate, succinate), inorganic sulfur-containing anions, and phosphate, across mitochondrial inner membrane. Plays an important role in gluconeogenesis, fatty acid metabolism, urea synthesis, and sulfur metabolism, particularly in liver, by supplying the substrates for the different metabolic processes. Regulates fatty acid release from adipocytes, and contributes to systemic insulin sensitivity. The protein is Mitochondrial dicarboxylate carrier of Mus musculus (Mouse).